The sequence spans 212 residues: uncharacterized protein (212 aa).

This is an uncharacterized protein from Rickettsia prowazekii (strain Madrid E).